A 287-amino-acid chain; its full sequence is Homoserine kinase (287 aa).

78–88 contributes to the ATP binding site; that stretch reads PLAHGLGSSSS.

Belongs to the GHMP kinase family. Homoserine kinase subfamily.

It localises to the cytoplasm. The enzyme catalyses L-homoserine + ATP = O-phospho-L-homoserine + ADP + H(+). Its pathway is amino-acid biosynthesis; L-threonine biosynthesis; L-threonine from L-aspartate: step 4/5. Catalyzes the ATP-dependent phosphorylation of L-homoserine to L-homoserine phosphate. This chain is Homoserine kinase, found in Lactobacillus acidophilus (strain ATCC 700396 / NCK56 / N2 / NCFM).